The sequence spans 496 residues: Ribose import ATP-binding protein RbsA (496 aa).

ABC transporter domains follow at residues 3–239 (IVME…VGRE) and 246–493 (ERTP…TGGN). 35–42 (GENGAGKS) serves as a coordination point for ATP.

It belongs to the ABC transporter superfamily. Ribose importer (TC 3.A.1.2.1) family. As to quaternary structure, the complex is composed of an ATP-binding protein (RbsA), two transmembrane proteins (RbsC) and a solute-binding protein (RbsB).

The protein localises to the cell membrane. It carries out the reaction D-ribose(out) + ATP + H2O = D-ribose(in) + ADP + phosphate + H(+). Functionally, part of the ABC transporter complex RbsABC involved in ribose import. Responsible for energy coupling to the transport system. In Oceanobacillus iheyensis (strain DSM 14371 / CIP 107618 / JCM 11309 / KCTC 3954 / HTE831), this protein is Ribose import ATP-binding protein RbsA.